Consider the following 1216-residue polypeptide: FK506-binding protein 15 (1216 aa).

Position 1 is an N-acetylmethionine (Met-1). 2 positions are modified to phosphoserine: Ser-14 and Ser-23. Positions 41–68 (YTAPKQPKKGQGTAAGNQTAPKPAPATT) are disordered. The span at 59–68 (TAPKPAPATT) shows a compositional bias: low complexity. The tract at residues 71-168 (SSVLFATAVH…AVSFNKQVCV (98 aa)) is important for function in growth cone organization. Lys-91 carries the post-translational modification N6-acetyllysine. One can recognise a PPIase FKBP-type domain in the interval 196–289 (GDSLEVAYTG…VFEVEVRRVK (94 aa)). Residues 292–357 (RDSGSDGHSV…QLTVNSNPDT (66 aa)) are disordered. Positions 303 to 322 (SRDSAAPSPIPASDSLSADP) are enriched in low complexity. Ser-306, Ser-310, Ser-342, Ser-344, and Ser-617 each carry phosphoserine. A compositionally biased stretch (polar residues) spans 340–356 (SKSNSLSEQLTVNSNPD). Coiled-coil stretches lie at residues 519 to 790 (MAVN…AAAE) and 820 to 865 (QQYR…RLEK). Residues 927–1216 (HQEEEEEEEE…DDDDDIGWLG (290 aa)) form a disordered region. Residues 929-940 (EEEEEEEEEEEE) show a composition bias toward acidic residues. Ser-948 bears the Phosphoserine mark. The segment covering 954–964 (PATPGMPPAPP) has biased composition (pro residues). A compositionally biased stretch (low complexity) spans 983-994 (TTPLPLQALPTP). Phosphoserine is present on Ser-1018. Residues 1036–1045 (TSIPPKPPGP) are compositionally biased toward pro residues. A phosphoserine mark is found at Ser-1050 and Ser-1091. Residue Thr-1093 is modified to Phosphothreonine. 5 positions are modified to phosphoserine: Ser-1108, Ser-1153, Ser-1157, Ser-1159, and Ser-1190. At Thr-1198 the chain carries Phosphothreonine. Residues 1202–1216 (GDDDDDDDDDIGWLG) show a composition bias toward acidic residues.

Belongs to the FKBP-type PPIase family. In terms of assembly, interacts with WIP and actin. Interacts with TBC1D23. Expressed in brain, with highest levels in the granular cell layer of cerebellum and in the granule cell layer of dentate gyrus.

The protein resides in the cytoplasm. It is found in the cell projection. The protein localises to the axon. It localises to the early endosome. Its function is as follows. Involved in the transport of early endosomes at the level of transition between microfilament-based and microtubule-based movement. May be involved in the cytoskeletal organization of neuronal growth cones. Seems to be inactive as a PPIase. In Mus musculus (Mouse), this protein is FK506-binding protein 15 (Fkbp15).